The chain runs to 139 residues: Actin-depolymerizing factor 6 (139 aa).

The ADF-H domain occupies 5–139 (ASGMAVGDEC…SMDIVKARAL (135 aa)).

It belongs to the actin-binding proteins ADF family.

Functionally, actin-depolymerizing protein. Severs actin filaments (F-actin) and binds to actin monomers. This Oryza sativa subsp. japonica (Rice) protein is Actin-depolymerizing factor 6 (ADF6).